The sequence spans 1069 residues: MEACTSKSSLLLHSPLRTIPKLRLCTTISSEDVAYGRCNLTDQHLQIEGKNYSKNTFDHIFRTDATQDDMYSAFLSDMINSVFAGNDATVLAMGAKANGKDERLYGNSVSRNGLIQMAITQLMNAIDDNKDPEERIQVRMSAIMVSQKDSSIVDLLSPFNDPRHRVVKLVDDARTGVFLDNESEIRVETIDQALFYLNTAVDHRLIQDEQTHRTSHVFISLSLYSYKMGDKMQGGRRRLCFLDMGIGERNSTNGGMTMPALGSILLAMVQRNKHIPSRDSSVCQLIRCALSTSRFTTFLFSFGSKNDDNENIAHLACKIARTRVKSVMGHGRKPSGTFSSGTMDSNGSSSSFGTTTITPGGTPRTQRRFELESGSELSAAETVIFLGPSCSRTTSPASTTMPSTPTSIRPLHRTTRNHSGVDPVSKPLSVETKSSPTHNCHDGCIHSIPPMLRGHTPFLSPHLKLYDELCSPPNSSCASPVLSAPNAFGGKTAERRDDFGIMIAQPHIPLMKAKSKYNLDDGKMKQIMQWMETSEAPPILFSSPCYENSATSLDELRECVGILSHPLEDIIEQEEESMRTSTATTGGSKKDHPLRILSKQDLNIDSEAKDKDETELELVMAASLSSMRSHDILAKLEAMRNAQSGQNGQNGNIGTSQSNTDMDVSEMDMYRRASHLEEYAMQRVREIEDNKMKNKKKVKLGLNCCQQQSMISSGSTVVDWSQIERKKEREKDAMEEEKRKEVLRERRAKLKITELEIKRERNMIDKELDDKKGIANSIARQLQHFSLSPCRGGRTHRSVSTHRIDPPNASLPSTPTMSHKKMIGGSLAKLSASGASGSGPPSSPSLGYHQSLPRHSKLPTAVNGRRSSAERDRKTSKNSRNASSKERRSSGSKEELQWRSPYAQMTSPKTYGGPGTSSSGRGSSAPGSDFETPVVSATEKTANGTMPRSKRQSYSASSGYESANDYHIYATTNKKANILEKKRNEEKLFLVRQADEIRHRQWQLKKELEEAKRAIGQEEDAKMIANSSDQRLNGLSRTTMVDAMLQENRILEKRLIACRNHSMLVTTFI.

Residues 15–325 (PLRTIPKLRL…ACKIARTRVK (311 aa)) form the Kinesin motor domain. 3 disordered regions span residues 328–374 (MGHG…LESG), 391–436 (SRTT…KSSP), and 572–598 (EQEE…RILS). Interaction with unc-51 regions lie at residues 331–517 (GRKP…KSKY) and 517–719 (YNLD…TVVD). Low complexity-rich tracts occupy residues 339 to 364 (SSGT…GTPR) and 391 to 407 (SRTT…TPTS). Residues 403–877 (STPTSIRPLH…SAERDRKTSK (475 aa)) form an interaction with unc-73 region. Positions 719–769 (DWSQIERKKEREKDAMEEEKRKEVLRERRAKLKITELEIKRERNMIDKELD) form a coiled coil. Residues 786–960 (SLSPCRGGRT…RQSYSASSGY (175 aa)) form a disordered region. Low complexity predominate over residues 824-847 (GGSLAKLSASGASGSGPPSSPSLG). Residues 883 to 897 (SSKERRSSGSKEELQ) are compositionally biased toward basic and acidic residues. Over residues 906–928 (TSPKTYGGPGTSSSGRGSSAPGS) the composition is skewed to low complexity. Positions 938–960 (TEKTANGTMPRSKRQSYSASSGY) are enriched in polar residues. Residues 990 to 1027 (LVRQADEIRHRQWQLKKELEEAKRAIGQEEDAKMIANS) are a coiled coil.

Belongs to the TRAFAC class myosin-kinesin ATPase superfamily. Kinesin family. KIF26 subfamily. In terms of assembly, interacts with unc-51 and unc-73. Phosphorylated by unc-51.

The protein resides in the cytoplasm. The protein localises to the cytoskeleton. Required for posterior migration of cells and axon growth cones during nervous system assembly. In PLM neuron, regulates innexin unc-9 gap junction turnover by suppressing unc-9 transport out of the gap junctions. The protein is Kinesin-like protein vab-8 (vab-8) of Caenorhabditis briggsae.